The primary structure comprises 338 residues: Ribonucleoside-diphosphate reductase small subunit (338 aa).

The Fe cation site is built by aspartate 81, glutamate 112, and histidine 115. Tyrosine 119 is a catalytic residue. Positions 174, 208, and 211 each coordinate Fe cation.

It belongs to the ribonucleoside diphosphate reductase small chain family. In terms of assembly, heterodimer of a large and a small subunit. Fe cation serves as cofactor.

The protein localises to the cytoplasm. The catalysed reaction is a 2'-deoxyribonucleoside 5'-diphosphate + [thioredoxin]-disulfide + H2O = a ribonucleoside 5'-diphosphate + [thioredoxin]-dithiol. Its function is as follows. Provides the precursors necessary for DNA synthesis. Catalyzes the biosynthesis of deoxyribonucleotides from the corresponding ribonucleotides. The sequence is that of Ribonucleoside-diphosphate reductase small subunit (rnrB-1) from Dictyostelium discoideum (Social amoeba).